Here is a 244-residue protein sequence, read N- to C-terminus: Tyrosine recombinase XerD-like (244 aa).

Positions 1–73 constitute a Core-binding (CB) domain; it reads MRDRISAFLE…ACNQFLYFLY (73 aa). The region spanning 90-244 is the Tyr recombinase domain; sequence AEKKTEKPEI…KTVLTLEKYR (155 aa). Active-site residues include Lys-150 and Arg-211. Catalysis depends on Tyr-243, which acts as the O-(3'-phospho-DNA)-tyrosine intermediate.

It belongs to the 'phage' integrase family. XerD-like subfamily.

It localises to the cytoplasm. Its function is as follows. Putative tyrosine recombinase. Not involved in the cutting and rejoining of the recombining DNA molecules on dif(SL) site. The protein is Tyrosine recombinase XerD-like of Streptococcus pneumoniae (strain Hungary19A-6).